Consider the following 386-residue polypeptide: Alpha-D-kanosaminyltransferase (386 aa).

The protein belongs to the glycosyltransferase group 1 family.

It carries out the reaction 2'-deamino-2'-hydroxyneamine + UDP-alpha-D-kanosamine = kanamycin A + UDP + H(+). The catalysed reaction is neamine + UDP-alpha-D-kanosamine = kanamycin B + UDP + H(+). The enzyme catalyses paromamine + UDP-alpha-D-kanosamine = kanamycin C + UDP + H(+). It catalyses the reaction 2'-deamino-2'-hydroxyparomamine + UDP-alpha-D-kanosamine = kanamycin X + UDP + H(+). It participates in antibiotic biosynthesis; kanamycin biosynthesis. In terms of biological role, glycosyltransferase involved in the biosynthesis of kanamycins by catalyzing the transfer of the hexose kanosamine from UDP-alpha-D-kanosamine to disaccharide precursors. Can also use UDP-alpha-D-glucose as sugar donor with much lower efficiency. This chain is Alpha-D-kanosaminyltransferase (kanE), found in Streptomyces kanamyceticus.